The following is a 138-amino-acid chain: Large ribosomal subunit protein uL16 (138 aa).

Residues Met-1–Gln-17 show a composition bias toward basic residues. The disordered stretch occupies residues Met-1–Gly-24.

It belongs to the universal ribosomal protein uL16 family. In terms of assembly, part of the 50S ribosomal subunit.

Its function is as follows. Binds 23S rRNA and is also seen to make contacts with the A and possibly P site tRNAs. The sequence is that of Large ribosomal subunit protein uL16 from Mycolicibacterium gilvum (strain PYR-GCK) (Mycobacterium gilvum (strain PYR-GCK)).